The sequence spans 438 residues: Sphingomyelinase phosphodiesterase D (438 aa).

Residues 1-17 (MKIILILVLVLVVSINA) form the signal peptide. The Zn(2+) site is built by D27 and H29. A glycan (N-linked (GlcNAc...) asparagine) is linked at N40. Zn(2+) is bound by residues D111 and N148. A glycan (N-linked (GlcNAc...) asparagine) is linked at N160. H247 lines the Zn(2+) pocket. N271 carries N-linked (GlcNAc...) asparagine glycosylation. Positions 287 and 289 each coordinate Zn(2+). Residues N338 and N359 are each glycosylated (N-linked (GlcNAc...) asparagine).

It belongs to the acid sphingomyelinase family. Zn(2+) serves as cofactor.

The protein resides in the secreted. The chain is Sphingomyelinase phosphodiesterase D (sgmD) from Dictyostelium discoideum (Social amoeba).